The following is an 802-amino-acid chain: Outer membrane usher protein PefC (802 aa).

An N-terminal signal peptide occupies residues 1–24; that stretch reads MSFHHRVFKLSALSLALFSHLSFA. Cys782 and Cys801 form a disulfide bridge.

The protein belongs to the fimbrial export usher family.

The protein localises to the cell outer membrane. In terms of biological role, involved in the export and assembly of FimA fimbrial subunits across the outer membrane. This chain is Outer membrane usher protein PefC (pefC), found in Salmonella typhimurium (strain LT2 / SGSC1412 / ATCC 700720).